Here is a 445-residue protein sequence, read N- to C-terminus: MKHIQKYQGKKVLVLGLGKSGYETAKLLYRLGAQVTVNDGKDVSQTEQYRELTEMGITVIGGHHPLSLLEHTTLIVKNPGIPYTLSLIEQAQTMNIPIITEVELAYEITESSILGITGTNGKTTVTSLIGDMFKAHEHAGLLCGNIGFVASKVAQNAGAHDTLVMELSSFQLMGIQEFRPHIALITNIYSAHLDYHGNQQNYIDAKMQITKNQTSEDYLIFNDKQRTLLQNYNIKSKVVYFSTDEKVEGAYIDQNKVYFYDEFIIDVKDIVLPGVHNLENVLASIAAAKLAGIDNIHICDTLKTFEGIKHRLQFVTETDGVKYYNDSKATNTLATSFALDSFHQPTHWLAGGLDRGNGFEELDTHIDHVKHMYIFGETTEKLTAFAAQHHIPYTICKDVTDAVLKTASYVERGEVVLLSPACASWDQYPTYEVRGEHFISQVKLI.

118-124 is an ATP binding site; sequence GTNGKTT.

This sequence belongs to the MurCDEF family.

It localises to the cytoplasm. The enzyme catalyses UDP-N-acetyl-alpha-D-muramoyl-L-alanine + D-glutamate + ATP = UDP-N-acetyl-alpha-D-muramoyl-L-alanyl-D-glutamate + ADP + phosphate + H(+). The protein operates within cell wall biogenesis; peptidoglycan biosynthesis. Functionally, cell wall formation. Catalyzes the addition of glutamate to the nucleotide precursor UDP-N-acetylmuramoyl-L-alanine (UMA). The sequence is that of UDP-N-acetylmuramoylalanine--D-glutamate ligase from Macrococcus caseolyticus (strain JCSC5402) (Macrococcoides caseolyticum).